A 484-amino-acid polypeptide reads, in one-letter code: MSGEDAPAQQQNAEEQKQQETKTPAESPKTESKPDPPPTSASTEAAATAAAAADTPAPAAEKAPEEDTFTYRALVLTGYGGYDKVKLQVKKGKPALKSGEVMVRVKMCGLNFADLMARQGLYDRLPSPPVTPGMECSGVIEAVGEEVTDRKVGDKVLVLNRSGMWQEVVVVASTHTFLMPEGMSFEEAAALPVNYITAYMMLFDFGHLRPNQSVLVHMAAGGVGIAATQLCKTVNDVTVFGTASASKHEVISQGGVTHPIDYRTRDYVEEVRKISPKGLDIVLDPLGGSDTHKGYNLLKPMGKLISYGAANMLAGQKKNLFAVAKTWYQQFSVHTLSLIQGNRSVCGFHLGYLDSETELIDQAMTAVMDLYRQGKVKPRIDSTYHLEQVGDAMRRMQERNNIGKIILTTEPMKEEEKKEEAKKDEEKKDDKKKDDKKKDDKKKEDKKKDEAKKEEKKDEKKKEEAKKDDKKAEEKKEEVKKEEN.

Composition is skewed to low complexity over residues 1–13 (MSGE…QQNA) and 40–61 (SAST…PAAE). 2 disordered regions span residues 1–65 (MSGE…KAPE) and 402–484 (IGKI…KEEN). The span at 411–484 (PMKEEEKKEE…KKEEVKKEEN (74 aa)) shows a compositional bias: basic and acidic residues.

The protein belongs to the zinc-containing alcohol dehydrogenase family. Quinone oxidoreductase subfamily.

The chain is Synaptic vesicle membrane protein VAT-1 homolog from Danio rerio (Zebrafish).